Here is a 383-residue protein sequence, read N- to C-terminus: L-lactate dehydrogenase (383 aa).

The region spanning 1-380 (MIIASTFDYR…TCESLVNTDA (380 aa)) is the FMN hydroxy acid dehydrogenase domain. A substrate-binding site is contributed by Tyr24. 2 residues coordinate FMN: Ser106 and Gln127. Position 129 (Tyr129) interacts with substrate. Thr155 is a binding site for FMN. Substrate is bound at residue Arg164. Lys251 contributes to the FMN binding site. Catalysis depends on His275, which acts as the Proton acceptor. Arg278 contributes to the substrate binding site. 306–330 (DSGVRSGLDVVRMIAQGADAVMIGR) contributes to the FMN binding site.

This sequence belongs to the FMN-dependent alpha-hydroxy acid dehydrogenase family. It depends on FMN as a cofactor.

The protein resides in the cell inner membrane. The enzyme catalyses (S)-lactate + A = pyruvate + AH2. Functionally, catalyzes the conversion of L-lactate to pyruvate. Is coupled to the respiratory chain. The protein is L-lactate dehydrogenase of Bartonella tribocorum (strain CIP 105476 / IBS 506).